The primary structure comprises 84 residues: Small ribosomal subunit protein uS17 (84 aa).

Belongs to the universal ribosomal protein uS17 family. As to quaternary structure, part of the 30S ribosomal subunit.

Its function is as follows. One of the primary rRNA binding proteins, it binds specifically to the 5'-end of 16S ribosomal RNA. The polypeptide is Small ribosomal subunit protein uS17 (Borreliella afzelii (strain PKo) (Borrelia afzelii)).